The primary structure comprises 262 residues: Tropinone reductase homolog At2g29290 (262 aa).

An NADP(+)-binding site is contributed by 13–37 (LVTGGTKGIGEAVVEELSILGARVH). Residue Ser146 participates in substrate binding. Catalysis depends on Tyr159, which acts as the Proton acceptor.

This sequence belongs to the short-chain dehydrogenases/reductases (SDR) family. SDR65C subfamily.

The chain is Tropinone reductase homolog At2g29290 from Arabidopsis thaliana (Mouse-ear cress).